Here is a 530-residue protein sequence, read N- to C-terminus: Histone-arginine methyltransferase CARMER (530 aa).

An SAM-dependent MTase PRMT-type domain is found at 141-450; that stretch reads ASQYFQFYGY…QSYDVTIDLH (310 aa). Q154, R163, G187, E209, E238, and T266 together coordinate S-adenosyl-L-methionine. Asymmetric dimethylarginine; by autocatalysis is present on R501.

It belongs to the class I-like SAM-binding methyltransferase superfamily. Protein arginine N-methyltransferase family. Homodimer. In terms of processing, the dimethylated protein is the major form.

The protein localises to the cytoplasm. It is found in the nucleus. It catalyses the reaction L-arginyl-[protein] + 2 S-adenosyl-L-methionine = N(omega),N(omega)-dimethyl-L-arginyl-[protein] + 2 S-adenosyl-L-homocysteine + 2 H(+). Its function is as follows. Methylates (mono- and asymmetric dimethylation) the guanidino nitrogens of arginyl residues in proteins. May methylate histone H3 at 'Arg-17' and activate transcription via chromatin remodeling. In Drosophila yakuba (Fruit fly), this protein is Histone-arginine methyltransferase CARMER (Art4).